Reading from the N-terminus, the 160-residue chain is Ubiquitin-like protein ATG12 (160 aa).

The segment at 1–40 (MSETPKDQGPSSPSPSPSPSAASPMPLADNEVAGSGASSP) is disordered. Residue Gly160 forms a Glycyl lysine isopeptide (Gly-Lys) (interchain with K-102 in ATG5) linkage.

This sequence belongs to the ATG12 family. As to quaternary structure, forms a conjugate with ATG5. Forms a thioester bond with the 'Cys-196' of ATG10. Interacts with the ATG7 C-terminal 40 amino acids domain. The ATG12-ATG5 conjugate forms a complex with several units of ATG16. The ATG12-ATG5 conjugate also associates with ATG3.

The protein resides in the preautophagosomal structure membrane. Functionally, ubiquitin-like protein involved in cytoplasm to vacuole transport (Cvt), autophagy vesicles formation, mitophagy, and nucleophagy. Conjugation with ATG5 through a ubiquitin-like conjugating system involving also ATG7 as an E1-like activating enzyme and ATG10 as an E2-like conjugating enzyme, is essential for its function. The ATG12-ATG5 conjugate acts as an E3-like enzyme which is required for lipidation of ATG8 and ATG8 association to the vesicle membranes. ATG12-ATG5 rearranges the ATG3 catalytic center and enhances its E2 activity. Autophagy is required for proper vegetative growth, asexual/sexual reproduction, and full virulence. Autophagy is particularly involved in the biosynthesis of deoxynivalenol (DON), an important virulence determinant. This is Ubiquitin-like protein ATG12 from Gibberella zeae (strain ATCC MYA-4620 / CBS 123657 / FGSC 9075 / NRRL 31084 / PH-1) (Wheat head blight fungus).